Here is a 316-residue protein sequence, read N- to C-terminus: tRNA dimethylallyltransferase (316 aa).

G17–T24 contributes to the ATP binding site. T19 to T24 is a substrate binding site. 4 interaction with substrate tRNA regions span residues D42 to L45, Q166 to R170, R247 to R252, and K280 to R287.

This sequence belongs to the IPP transferase family. Monomer. Requires Mg(2+) as cofactor.

The enzyme catalyses adenosine(37) in tRNA + dimethylallyl diphosphate = N(6)-dimethylallyladenosine(37) in tRNA + diphosphate. Its function is as follows. Catalyzes the transfer of a dimethylallyl group onto the adenine at position 37 in tRNAs that read codons beginning with uridine, leading to the formation of N6-(dimethylallyl)adenosine (i(6)A). The polypeptide is tRNA dimethylallyltransferase (Escherichia coli O157:H7).